We begin with the raw amino-acid sequence, 186 residues long: Lactoylglutathione lyase (186 aa).

Residues 28 to 175 (FMQQTMFRIK…DGYWIELFDR (148 aa)) form the VOC domain. Substrate-binding residues include Gln31 and Arg35. Zn(2+) is bound at residue Gln31. A Zn(2+)-binding site is contributed by Glu97. Residues Asn101, Arg121, His125, and 155–156 (KM) each bind substrate. His125 contributes to the Zn(2+) binding site. Glu171 contributes to the Zn(2+) binding site. Residue Glu171 is the Proton donor/acceptor of the active site.

This sequence belongs to the glyoxalase I family. The cofactor is Zn(2+).

It catalyses the reaction (R)-S-lactoylglutathione = methylglyoxal + glutathione. It functions in the pathway secondary metabolite metabolism; methylglyoxal degradation; (R)-lactate from methylglyoxal: step 1/2. Functionally, catalyzes the conversion of hemimercaptal, formed from methylglyoxal and glutathione, to S-lactoylglutathione. The sequence is that of Lactoylglutathione lyase from Cicer arietinum (Chickpea).